The primary structure comprises 90 residues: Probable Fe(2+)-trafficking protein (90 aa).

Belongs to the Fe(2+)-trafficking protein family.

In terms of biological role, could be a mediator in iron transactions between iron acquisition and iron-requiring processes, such as synthesis and/or repair of Fe-S clusters in biosynthetic enzymes. The sequence is that of Probable Fe(2+)-trafficking protein from Laribacter hongkongensis (strain HLHK9).